A 186-amino-acid chain; its full sequence is Elongation factor P (186 aa).

Arg-32 carries an N-alpha-linked (Rha) arginine glycan.

It belongs to the elongation factor P family. In terms of processing, glycosylated ar Arg-32 by EarP: arginine rhamnosylation is required for EF-P function and rescue of polyproline stalled ribosomes.

The protein localises to the cytoplasm. It functions in the pathway protein biosynthesis; polypeptide chain elongation. Functionally, involved in peptide bond synthesis. Stimulates efficient translation and peptide-bond synthesis on native or reconstituted 70S ribosomes in vitro. Probably functions indirectly by altering the affinity of the ribosome for aminoacyl-tRNA, thus increasing their reactivity as acceptors for peptidyl transferase. This is Elongation factor P from Shewanella oneidensis (strain ATCC 700550 / JCM 31522 / CIP 106686 / LMG 19005 / NCIMB 14063 / MR-1).